A 358-amino-acid polypeptide reads, in one-letter code: NADH-quinone oxidoreductase subunit H (358 aa).

A run of 8 helical transmembrane segments spans residues 30–50 (IAVGVCIVALYAILAIVLIYM), 96–116 (FLYNLAPFMVIIASFLTFACI), 129–149 (VGVFFLLAASSIGVVGILLAG), 168–188 (IISYELSVGMSIMTMVVLMGT), 201–221 (GWFIFKGHIPAVIAFIIYLIA), 265–285 (FIVASVAATIFLGGWMPLHII), 297–317 (IPGFIWFFAKAFFVVFLLMWI), and 336–356 (YLVPISMVNLLLMACCVAFGF).

This sequence belongs to the complex I subunit 1 family. NDH-1 is composed of 14 different subunits. Subunits NuoA, H, J, K, L, M, N constitute the membrane sector of the complex.

It is found in the cell inner membrane. It catalyses the reaction a quinone + NADH + 5 H(+)(in) = a quinol + NAD(+) + 4 H(+)(out). Its function is as follows. NDH-1 shuttles electrons from NADH, via FMN and iron-sulfur (Fe-S) centers, to quinones in the respiratory chain. The immediate electron acceptor for the enzyme in this species is believed to be ubiquinone. Couples the redox reaction to proton translocation (for every two electrons transferred, four hydrogen ions are translocated across the cytoplasmic membrane), and thus conserves the redox energy in a proton gradient. This subunit may bind ubiquinone. This chain is NADH-quinone oxidoreductase subunit H, found in Bacteroides thetaiotaomicron (strain ATCC 29148 / DSM 2079 / JCM 5827 / CCUG 10774 / NCTC 10582 / VPI-5482 / E50).